A 184-amino-acid chain; its full sequence is MISAEEALYQSCYCEENVYKLIEKIDDKNGIFAIIISNDCKMIPLWKQKAAKSINGHVLWDYHVIAIEKEKNGSKVYDLDSTLEWSCDFLEYWEKTMNLAEMAQRDTKFRRKFRVIPGENYISLLSSDRSHMLSKNGVYLKPPPEWPLINSHKPSNLMELIRMSEQIENTTVMDEPELFQLFSK.

Residues Cys-14, His-63, and Asp-78 contribute to the active site.

It belongs to the NTAQ1 family. Monomer.

It catalyses the reaction N-terminal L-glutaminyl-[protein] + H2O = N-terminal L-glutamyl-[protein] + NH4(+). Mediates the side-chain deamidation of N-terminal glutamine residues to glutamate, an important step in N-end rule pathway of protein degradation. Conversion of the resulting N-terminal glutamine to glutamate renders the protein susceptible to arginylation, polyubiquitination and degradation as specified by the N-end rule. Does not act on substrates with internal or C-terminal glutamine and does not act on non-glutamine residues in any position. The sequence is that of Protein N-terminal glutamine amidohydrolase from Caenorhabditis elegans.